The chain runs to 93 residues: Small ribosomal subunit protein uS19 (93 aa).

Belongs to the universal ribosomal protein uS19 family.

Protein S19 forms a complex with S13 that binds strongly to the 16S ribosomal RNA. The polypeptide is Small ribosomal subunit protein uS19 (Ehrlichia canis (strain Jake)).